The sequence spans 98 residues: Gas vesicle protein J2 (98 aa).

Residues 75-98 (AGVDADDSKSVLERPDPPTTEGSE) form a disordered region. Basic and acidic residues predominate over residues 80-90 (DDSKSVLERPD).

It belongs to the gas vesicle GvpA family. In terms of assembly, gvpF to GvpM interact with each other in vitro, and may form multi-subunit complex(es). Interacts with GvpA.

It is found in the gas vesicle. Its function is as follows. A minor component of the gas vesicle. Proteins GvpF to GvpM might be involved in nucleating gas vesicle formation. Gas vesicles are hollow, gas filled proteinaceous nanostructures found in several microbial planktonic microorganisms. They allow positioning of halobacteria at the optimal depth for growth in the poorly aerated, shallow brine pools of their habitat. Functionally, expression of 2 c-vac DNA fragments containing 2 divergently transcribed regions (gvpE-gvpF-gvpG-gvpH-gvpI-gvpJ-gvpK-gvpL-gvpM and gvpA-gvpC-gvpN-gvpO) allows H.volcanii to produce gas vesicles. The chain is Gas vesicle protein J2 from Halobacterium salinarum (strain ATCC 700922 / JCM 11081 / NRC-1) (Halobacterium halobium).